The primary structure comprises 328 residues: dITP/XTP pyrophosphatase (328 aa).

The unknown stretch occupies residues 1-129 (MSEKIYEYKD…ATSEQGFGDI (129 aa)). An NTP pyrophosphatase region spans residues 130 to 324 (ILIATRNEGK…KLMEVFPAWQ (195 aa)). 134-139 (TRNEGK) contributes to the substrate binding site. Aspartate 196 functions as the Proton acceptor in the catalytic mechanism. Mg(2+) is bound at residue aspartate 196. Substrate is bound by residues serine 197, 280–283 (FGYD), lysine 303, and 308–309 (HR).

Belongs to the HAM1 NTPase family. Homodimer. Requires Mg(2+) as cofactor.

It catalyses the reaction XTP + H2O = XMP + diphosphate + H(+). It carries out the reaction dITP + H2O = dIMP + diphosphate + H(+). The enzyme catalyses ITP + H2O = IMP + diphosphate + H(+). Pyrophosphatase that catalyzes the hydrolysis of nucleoside triphosphates to their monophosphate derivatives, with a high preference for the non-canonical purine nucleotides XTP (xanthosine triphosphate), dITP (deoxyinosine triphosphate) and ITP. Seems to function as a house-cleaning enzyme that removes non-canonical purine nucleotides from the nucleotide pool, thus preventing their incorporation into DNA/RNA and avoiding chromosomal lesions. This Streptococcus pyogenes serotype M3 (strain ATCC BAA-595 / MGAS315) protein is dITP/XTP pyrophosphatase.